A 119-amino-acid polypeptide reads, in one-letter code: Large ribosomal subunit protein bL20 (119 aa).

This sequence belongs to the bacterial ribosomal protein bL20 family.

Its function is as follows. Binds directly to 23S ribosomal RNA and is necessary for the in vitro assembly process of the 50S ribosomal subunit. It is not involved in the protein synthesizing functions of that subunit. The sequence is that of Large ribosomal subunit protein bL20 from Clostridium kluyveri (strain NBRC 12016).